A 118-amino-acid polypeptide reads, in one-letter code: NADH-ubiquinone oxidoreductase chain 3 (118 aa).

2 helical membrane-spanning segments follow: residues 7 to 27 (ICIY…LPFL) and 87 to 107 (IDPF…IGSL).

Belongs to the complex I subunit 3 family.

The protein localises to the mitochondrion membrane. The catalysed reaction is a ubiquinone + NADH + 5 H(+)(in) = a ubiquinol + NAD(+) + 4 H(+)(out). Core subunit of the mitochondrial membrane respiratory chain NADH dehydrogenase (Complex I) that is believed to belong to the minimal assembly required for catalysis. Complex I functions in the transfer of electrons from NADH to the respiratory chain. The immediate electron acceptor for the enzyme is believed to be ubiquinone. The sequence is that of NADH-ubiquinone oxidoreductase chain 3 (ND3) from Solanum tuberosum (Potato).